The following is a 253-amino-acid chain: MTEFVVLIPARLDSSRLPGKALADIHGKPMVVRVAEQAAKSKAARVVVATDHPDIQTACQAHGIEVVMTSNRHESGTTRLAEASAALKLPPHLVVVNVQGDEPLIAPELIDRTAEVLVENNVQMATAAHELHDFDELMNPNAVKVVLDKNRNAIYFSRAPIPYPRDAMRAGKREMPSETAVLRHIGIYAYRAGFLQRYAEMSVSPLETIESLEQLRVLWHGYPIAVETAKEAPAAGVDTQEDLDRVRAVFQTV.

The protein belongs to the KdsB family.

It is found in the cytoplasm. It carries out the reaction 3-deoxy-alpha-D-manno-oct-2-ulosonate + CTP = CMP-3-deoxy-beta-D-manno-octulosonate + diphosphate. It functions in the pathway nucleotide-sugar biosynthesis; CMP-3-deoxy-D-manno-octulosonate biosynthesis; CMP-3-deoxy-D-manno-octulosonate from 3-deoxy-D-manno-octulosonate and CTP: step 1/1. Its pathway is bacterial outer membrane biogenesis; lipopolysaccharide biosynthesis. Activates KDO (a required 8-carbon sugar) for incorporation into bacterial lipopolysaccharide in Gram-negative bacteria. In Neisseria meningitidis serogroup C / serotype 2a (strain ATCC 700532 / DSM 15464 / FAM18), this protein is 3-deoxy-manno-octulosonate cytidylyltransferase.